We begin with the raw amino-acid sequence, 118 residues long: Large ribosomal subunit protein uL18 (118 aa).

This sequence belongs to the universal ribosomal protein uL18 family. As to quaternary structure, part of the 50S ribosomal subunit; part of the 5S rRNA/L5/L18/L25 subcomplex. Contacts the 5S and 23S rRNAs.

Its function is as follows. This is one of the proteins that bind and probably mediate the attachment of the 5S RNA into the large ribosomal subunit, where it forms part of the central protuberance. In Brachyspira hyodysenteriae (strain ATCC 49526 / WA1), this protein is Large ribosomal subunit protein uL18.